Here is a 450-residue protein sequence, read N- to C-terminus: Chromosomal replication initiator protein DnaA (450 aa).

Residues 1-79 (MENIHDLWNR…TGEELLIKFI (79 aa)) form a domain I, interacts with DnaA modulators region. A domain II region spans residues 79–111 (ITPPNQSEDDFEFQRSSKKHRKPYEESTDFPQS). A domain III, AAA+ region region spans residues 112 to 328 (MLNPKYTFDT…GALIRVVAYS (217 aa)). ATP contacts are provided by Gly156, Gly158, Lys159, and Thr160. Residues 329–450 (SLINKEITAD…KEIEEKLKQL (122 aa)) form a domain IV, binds dsDNA region.

This sequence belongs to the DnaA family. As to quaternary structure, oligomerizes as a right-handed, spiral filament on DNA at oriC.

Its subcellular location is the cytoplasm. Functionally, plays an essential role in the initiation and regulation of chromosomal replication. ATP-DnaA binds to the origin of replication (oriC) to initiate formation of the DNA replication initiation complex once per cell cycle. Binds the DnaA box (a 9 base pair repeat at the origin) and separates the double-stranded (ds)DNA. Forms a right-handed helical filament on oriC DNA; dsDNA binds to the exterior of the filament while single-stranded (ss)DNA is stabiized in the filament's interior. The ATP-DnaA-oriC complex binds and stabilizes one strand of the AT-rich DNA unwinding element (DUE), permitting loading of DNA polymerase. After initiation quickly degrades to an ADP-DnaA complex that is not apt for DNA replication. Binds acidic phospholipids. The chain is Chromosomal replication initiator protein DnaA from Geobacillus sp. (strain WCH70).